The following is a 105-amino-acid chain: Large ribosomal subunit protein uL24 (105 aa).

It belongs to the universal ribosomal protein uL24 family. As to quaternary structure, part of the 50S ribosomal subunit.

Its function is as follows. One of two assembly initiator proteins, it binds directly to the 5'-end of the 23S rRNA, where it nucleates assembly of the 50S subunit. One of the proteins that surrounds the polypeptide exit tunnel on the outside of the subunit. This Thermotoga petrophila (strain ATCC BAA-488 / DSM 13995 / JCM 10881 / RKU-1) protein is Large ribosomal subunit protein uL24.